The following is a 506-amino-acid chain: EPTC-inducible aldehyde dehydrogenase (506 aa).

Position 219–225 (219–225) interacts with NAD(+); the sequence is GFGVEAG. Active-site residues include Glu263 and Cys302.

The protein belongs to the aldehyde dehydrogenase family.

It carries out the reaction an aldehyde + NAD(+) + H2O = a carboxylate + NADH + 2 H(+). Degrades all aldehydes potentially generated by N dealkylation of thiocarbamates and may also participate in ethanolamine metabolism and further assimilation of degradation products by thiocarbamate-induced cytochrome P-450. The polypeptide is EPTC-inducible aldehyde dehydrogenase (thcA) (Rhodococcus erythropolis (Arthrobacter picolinophilus)).